The sequence spans 708 residues: Ion-translocating oxidoreductase complex subunit C (708 aa).

4Fe-4S ferredoxin-type domains lie at 369–397 and 407–436; these read GEPQEEQSCIRCSACADACPADLLPQQLY and KATTHNIADCIECGACAWVCPSNIPLVQYF. Positions 377, 380, 383, 387, 416, 419, 422, and 426 each coordinate [4Fe-4S] cluster. A disordered region spans residues 663 to 684; the sequence is KARKLEQQQTNAEPEEQVDPRK.

It belongs to the 4Fe4S bacterial-type ferredoxin family. RnfC subfamily. In terms of assembly, the complex is composed of six subunits: RsxA, RsxB, RsxC, RsxD, RsxE and RsxG. It depends on [4Fe-4S] cluster as a cofactor.

The protein resides in the cell inner membrane. Its function is as follows. Part of a membrane-bound complex that couples electron transfer with translocation of ions across the membrane. Required to maintain the reduced state of SoxR. The polypeptide is Ion-translocating oxidoreductase complex subunit C (Shigella boydii serotype 18 (strain CDC 3083-94 / BS512)).